The primary structure comprises 1268 residues: ATP-dependent helicase/nuclease subunit A (1268 aa).

The 474-residue stretch at 3–476 (TKWTEEQELA…IMLYKNFRSR (474 aa)) folds into the UvrD-like helicase ATP-binding domain. An ATP-binding site is contributed by 24 to 31 (AAAGSGKT). The 297-residue stretch at 528 to 824 (IENLKVAGDI…RIMSIHKSKG (297 aa)) folds into the UvrD-like helicase C-terminal domain.

This sequence belongs to the helicase family. AddA subfamily. As to quaternary structure, heterodimer of AddA and AddB/RexB. The cofactor is Mg(2+).

The catalysed reaction is Couples ATP hydrolysis with the unwinding of duplex DNA by translocating in the 3'-5' direction.. It carries out the reaction ATP + H2O = ADP + phosphate + H(+). In terms of biological role, the heterodimer acts as both an ATP-dependent DNA helicase and an ATP-dependent, dual-direction single-stranded exonuclease. Recognizes the chi site generating a DNA molecule suitable for the initiation of homologous recombination. The AddA nuclease domain is required for chi fragment generation; this subunit has the helicase and 3' -&gt; 5' nuclease activities. The protein is ATP-dependent helicase/nuclease subunit A of Clostridium perfringens (strain 13 / Type A).